A 343-amino-acid chain; its full sequence is UDP-3-O-acylglucosamine N-acyltransferase (343 aa).

Histidine 238 acts as the Proton acceptor in catalysis.

This sequence belongs to the transferase hexapeptide repeat family. LpxD subfamily. As to quaternary structure, homotrimer.

The enzyme catalyses a UDP-3-O-[(3R)-3-hydroxyacyl]-alpha-D-glucosamine + a (3R)-hydroxyacyl-[ACP] = a UDP-2-N,3-O-bis[(3R)-3-hydroxyacyl]-alpha-D-glucosamine + holo-[ACP] + H(+). Its pathway is bacterial outer membrane biogenesis; LPS lipid A biosynthesis. Catalyzes the N-acylation of UDP-3-O-acylglucosamine using 3-hydroxyacyl-ACP as the acyl donor. Is involved in the biosynthesis of lipid A, a phosphorylated glycolipid that anchors the lipopolysaccharide to the outer membrane of the cell. This Marinomonas sp. (strain MWYL1) protein is UDP-3-O-acylglucosamine N-acyltransferase.